The following is a 310-amino-acid chain: MQREKAQSRVAVYYELSKPKIWYLLVFTAFGAAVAASGIYGIEISIATWALMLFSVAAGSASANVLTNYHDRDIDAIMKRTQKRPLPSGRVTPAGARNFGLFLAGASMVMAACIALTTTPVQGAWAAAFIAFGLFNNVLVYSYMLKRRSRSNIVLGGLCGGMPPMIGWVAVTTADLWTMGLVMGGLVFIWTPMHIWALTLHFRDDYNKVNVPMLTAVHSEGTSARVIAVSTVAMALFSLAPLLITLEDGAAAVGPVYLATAAASGALIIALSAWVVYKPTEKAAWVLFKFSSPYLAVLFIALMVDAGLRA.

Helical transmembrane passes span 21 to 41 (IWYL…GIYG), 46 to 66 (IATW…ANVL), 99 to 119 (FGLF…LTTT), 125 to 145 (WAAA…SYML), 153 to 173 (IVLG…AVTT), 180 to 200 (GLVM…ALTL), 226 to 246 (VIAV…LITL), 256 to 276 (VYLA…AWVV), and 284 to 304 (AWVL…ALMV).

Belongs to the UbiA prenyltransferase family. Protoheme IX farnesyltransferase subfamily.

It localises to the cell membrane. The enzyme catalyses heme b + (2E,6E)-farnesyl diphosphate + H2O = Fe(II)-heme o + diphosphate. It participates in porphyrin-containing compound metabolism; heme O biosynthesis; heme O from protoheme: step 1/1. In terms of biological role, converts heme B (protoheme IX) to heme O by substitution of the vinyl group on carbon 2 of heme B porphyrin ring with a hydroxyethyl farnesyl side group. The sequence is that of Protoheme IX farnesyltransferase 2 from Cenarchaeum symbiosum (strain A).